A 73-amino-acid chain; its full sequence is Protein WFDC10B (73 aa).

The signal sequence occupies residues methionine 1–glycine 21. In terms of domain architecture, WAP spans arginine 28–leucine 73.

In terms of tissue distribution, ubiquitously expressed.

The protein localises to the secreted. This chain is Protein WFDC10B (WFDC10B), found in Homo sapiens (Human).